The sequence spans 313 residues: Ribose 1,5-bisphosphate isomerase (313 aa).

Residues 17-20 and arginine 57 each bind substrate; that span reads RGAA. Cysteine 121 functions as the Proton acceptor in the catalytic mechanism. The Proton donor role is filled by aspartate 190. Substrate is bound by residues 200-201 and lysine 226; that span reads NK.

The protein belongs to the eIF-2B alpha/beta/delta subunits family. R15P isomerase subfamily.

It catalyses the reaction alpha-D-ribose 1,5-bisphosphate = D-ribulose 1,5-bisphosphate. Catalyzes the isomerization of ribose 1,5-bisphosphate (R15P) to ribulose 1,5-bisphosphate (RuBP), the CO(2) acceptor and substrate for RubisCO. Functions in an archaeal AMP degradation pathway, together with AMP phosphorylase and RubisCO. This Archaeoglobus fulgidus (strain ATCC 49558 / DSM 4304 / JCM 9628 / NBRC 100126 / VC-16) protein is Ribose 1,5-bisphosphate isomerase.